A 154-amino-acid polypeptide reads, in one-letter code: Small ribosomal subunit protein bS6 (154 aa).

Residues 97–154 (DSEPSAMMQKRDRDDRKDRERGRRRDDEGFGGGGGFGGDRGDRGDRGDRGERSFGGEG) are disordered. Composition is skewed to basic and acidic residues over residues 105–124 (QKRD…RDDE) and 135–154 (DRGD…GGEG).

This sequence belongs to the bacterial ribosomal protein bS6 family.

In terms of biological role, binds together with bS18 to 16S ribosomal RNA. The polypeptide is Small ribosomal subunit protein bS6 (Methylobacterium radiotolerans (strain ATCC 27329 / DSM 1819 / JCM 2831 / NBRC 15690 / NCIMB 10815 / 0-1)).